A 1428-amino-acid chain; its full sequence is uncharacterized protein (1428 aa).

3 disordered regions span residues 1–53, 249–274, and 377–413; these read MAKK…AFKV, DIKH…KDSK, and KNGI…ETRA. Residues 16-33 show a composition bias toward polar residues; it reads ATTSIPSRSASSPANKNQ. Residues 34-51 are compositionally biased toward basic and acidic residues; it reads VKGEKNNKTQKVEPKNAF. The span at 256 to 265 shows a compositional bias: polar residues; that stretch reads KETQPSNQVD. Positions 641–811 constitute a Helicase ATP-binding domain; that stretch reads IDAVNNSQLL…FEGSNLITIP (171 aa). 654–661 provides a ligand contact to ATP; that stretch reads GDTGCGKS. The DEAH box motif lies at 758–761; the sequence is DEVH. The region spanning 886–1064 is the Helicase C-terminal domain; it reads LIVYLLKYIF…EVVLRVKMCQ (179 aa).

Belongs to the helicase family. SKI2 subfamily.

It localises to the cytoplasm. This is an uncharacterized protein from Schizosaccharomyces pombe (strain 972 / ATCC 24843) (Fission yeast).